Reading from the N-terminus, the 907-residue chain is Leucine--tRNA ligase (907 aa).

The 'HIGH' region motif lies at 42-52; sequence PYPSGKLHMGH. The 'KMSKS' region motif lies at 651–655; the sequence is TMSKS. Lys-654 is an ATP binding site.

The protein belongs to the class-I aminoacyl-tRNA synthetase family.

It is found in the cytoplasm. The enzyme catalyses tRNA(Leu) + L-leucine + ATP = L-leucyl-tRNA(Leu) + AMP + diphosphate. The chain is Leucine--tRNA ligase from Verminephrobacter eiseniae (strain EF01-2).